A 116-amino-acid chain; its full sequence is uncharacterized protein (116 aa).

The Extracellular portion of the chain corresponds to 1–46 (MGDNTTVAPGTNQTLVEEDLGAQITHTLMVQIMSKLNEMLTEYQPQ). N4 and N12 each carry an N-linked (GlcNAc...) asparagine; by host glycan. A helical membrane pass occupies residues 47-67 (IIGIGATVLAIFVIMFISLLI). The Cytoplasmic portion of the chain corresponds to 68–116 (ILGCNCIRPYNFKNLKRYITGKASKSVEYQPLKMSAVNMGMDEDDEFLA).

Its subcellular location is the host membrane. This is an uncharacterized protein from Magallana gigas (Pacific oyster).